Reading from the N-terminus, the 183-residue chain is Somatotropin (183 aa).

H19 contacts Zn(2+). The tract at residues 38-67 is disordered; it reads EEQRHSHKSSPSAFCQSETIPAPTGKEDAQ. A compositionally biased stretch (polar residues) spans 46–56; the sequence is SSPSAFCQSET. Residues C52 and C156 are joined by a disulfide bond. Residue E165 participates in Zn(2+) binding. Residues C173 and C181 are joined by a disulfide bond.

This sequence belongs to the somatotropin/prolactin family.

The protein localises to the secreted. In terms of biological role, growth hormone plays an important role in growth control and is involved in the regulation of several anabolic processes. Implicated as an osmoregulatory substance important for seawater adaptation. The sequence is that of Somatotropin (gh) from Prionace glauca (Blue shark).